A 174-amino-acid polypeptide reads, in one-letter code: Gamma-crystallin D (174 aa).

Beta/gamma crystallin 'Greek key' domains lie at 2–40 (GKIT…RVDS) and 41–83 (GCWM…RLIP). The tract at residues 84–87 (HAGS) is connecting peptide. 2 consecutive Beta/gamma crystallin 'Greek key' domains span residues 88–128 (HRIR…NVLE) and 129–171 (GCWV…RRVM).

The protein belongs to the beta/gamma-crystallin family. Detected in the superior olivary complex of the auditory hindbrain.

Functionally, crystallins are the dominant structural components of the vertebrate eye lens. The sequence is that of Gamma-crystallin D (Crygd) from Mus musculus (Mouse).